A 58-amino-acid polypeptide reads, in one-letter code: Single-pass membrane and coiled-coil domain-containing protein 4 homolog (58 aa).

Residues 1 to 31 (MRQLKGKVKETRKQKKERKLDNLETQAKIRT) adopt a coiled-coil conformation. Residues 31-51 (TVVLPALGVLAVFLVLFVYLK) traverse the membrane as a helical segment.

It belongs to the SMCO4 family.

The protein localises to the membrane. The chain is Single-pass membrane and coiled-coil domain-containing protein 4 homolog from Drosophila melanogaster (Fruit fly).